The sequence spans 282 residues: Cell cycle checkpoint protein RAD1 (282 aa).

This sequence belongs to the rad1 family. As to quaternary structure, component of the toroidal 9-1-1 (RAD9-RAD1-HUS1) complex, composed of RAD9A, RAD1 and HUS1. The 9-1-1 complex associates with LIG1, POLB, FEN1, RAD17, HDAC1, RPA1 and RPA2. The 9-1-1 complex associates with the RAD17-RFC complex. RAD1 interacts with POLB, FEN1, HUS1, HUS1B, RAD9A and RAD9B. Interacts with DNAJC7. Interacts with RHNO1; interaction is direct. In terms of tissue distribution, expressed in testis, uterus, bladder, spleen, ovaries, lung, brain and muscle (at protein level).

It is found in the nucleus. Component of the 9-1-1 cell-cycle checkpoint response complex that plays a major role in DNA repair. The 9-1-1 complex is recruited to DNA lesion upon damage by the RAD17-replication factor C (RFC) clamp loader complex. Acts then as a sliding clamp platform on DNA for several proteins involved in long-patch base excision repair (LP-BER). The 9-1-1 complex stimulates DNA polymerase beta (POLB) activity by increasing its affinity for the 3'-OH end of the primer-template and stabilizes POLB to those sites where LP-BER proceeds; endonuclease FEN1 cleavage activity on substrates with double, nick, or gap flaps of distinct sequences and lengths; and DNA ligase I (LIG1) on long-patch base excision repair substrates. The 9-1-1 complex is necessary for the recruitment of RHNO1 to sites of double-stranded breaks (DSB) occurring during the S phase. This chain is Cell cycle checkpoint protein RAD1 (RAD1), found in Homo sapiens (Human).